The chain runs to 118 residues: Probable non-functional immunoglobulin lambda variable 1-50 (118 aa).

The signal sequence occupies residues 1-19 (MAWSSLLLTLLAHCTGSWA). The interval 20-44 (QSVLTQPPSVSGAPGQRVTISCTGS) is framework-1. The Ig-like domain occupies 20–118 (QSVLTQPPSV…CKAWDNSLNA (99 aa)). Cys-41 and Cys-109 form a disulfide bridge. The complementarity-determining-1 stretch occupies residues 45-53 (SSNIGAGYV). Residues 54–70 (VHWYQQLPGTAPKLLIY) form a framework-2 region. Residues 71–73 (GNS) form a complementarity-determining-2 region. Residues 74-109 (NRPSGVPDQFSGSKSGTSASLAITGLQSEDEADYYC) form a framework-3 region. The interval 110–118 (KAWDNSLNA) is complementarity-determining-3.

In terms of assembly, immunoglobulins are composed of two identical heavy chains and two identical light chains; disulfide-linked.

It is found in the secreted. The protein resides in the cell membrane. Its function is as follows. Probable non-functional open reading frame (ORF) of V region of the variable domain of immunoglobulin light chains. Non-functional ORF generally cannot participate in the synthesis of a productive immunoglobulin chain due to altered V-(D)-J or switch recombination and/or splicing site (at mRNA level) and/or conserved amino acid change (protein level). Immunoglobulins, also known as antibodies, are membrane-bound or secreted glycoproteins produced by B lymphocytes. In the recognition phase of humoral immunity, the membrane-bound immunoglobulins serve as receptors which, upon binding of a specific antigen, trigger the clonal expansion and differentiation of B lymphocytes into immunoglobulins-secreting plasma cells. Secreted immunoglobulins mediate the effector phase of humoral immunity, which results in the elimination of bound antigens. The antigen binding site is formed by the variable domain of one heavy chain, together with that of its associated light chain. Thus, each immunoglobulin has two antigen binding sites with remarkable affinity for a particular antigen. The variable domains are assembled by a process called V-(D)-J rearrangement and can then be subjected to somatic hypermutations which, after exposure to antigen and selection, allow affinity maturation for a particular antigen. The protein is Probable non-functional immunoglobulin lambda variable 1-50 of Homo sapiens (Human).